A 214-amino-acid polypeptide reads, in one-letter code: Homologous-pairing protein 2 homolog (214 aa).

Residues serine 79 to alanine 147 are a coiled coil. The DNA-binding stretch occupies residues threonine 115–aspartate 179.

It belongs to the HOP2 family.

The protein resides in the nucleus. Its function is as follows. Plays an important role in meiotic recombination. Stimulates DMC1-mediated strand exchange required for pairing of homologous chromosomes during meiosis. This Xenopus laevis (African clawed frog) protein is Homologous-pairing protein 2 homolog (psmc3ip).